A 150-amino-acid polypeptide reads, in one-letter code: UPF0756 membrane protein STH2648 (150 aa).

4 helical membrane passes run A13–L33, A52–W72, L85–L105, and V111–V131.

Belongs to the UPF0756 family.

The protein resides in the cell membrane. The protein is UPF0756 membrane protein STH2648 of Symbiobacterium thermophilum (strain DSM 24528 / JCM 14929 / IAM 14863 / T).